The chain runs to 320 residues: Mycothiol acetyltransferase (320 aa).

N-acetyltransferase domains lie at 16-141 and 152-320; these read RQVR…RSLR and LQIR…AALA. Glu-36 lines the 1D-myo-inositol 2-(L-cysteinylamino)-2-deoxy-alpha-D-glucopyranoside pocket. Acetyl-CoA is bound by residues 80–82 and 88–93; these read LVV and RRGIAT. 1D-myo-inositol 2-(L-cysteinylamino)-2-deoxy-alpha-D-glucopyranoside-binding residues include Glu-179, Lys-229, and Glu-239. Residues 243-245 and 250-256 each bind acetyl-CoA; these read LGV and QGRGLGR. Residue Tyr-284 participates in 1D-myo-inositol 2-(L-cysteinylamino)-2-deoxy-alpha-D-glucopyranoside binding. Position 289 to 294 (289 to 294) interacts with acetyl-CoA; sequence NIAAVR.

This sequence belongs to the acetyltransferase family. MshD subfamily. Monomer.

The catalysed reaction is 1D-myo-inositol 2-(L-cysteinylamino)-2-deoxy-alpha-D-glucopyranoside + acetyl-CoA = mycothiol + CoA + H(+). Its function is as follows. Catalyzes the transfer of acetyl from acetyl-CoA to desacetylmycothiol (Cys-GlcN-Ins) to form mycothiol. This chain is Mycothiol acetyltransferase, found in Mycobacterium marinum (strain ATCC BAA-535 / M).